Reading from the N-terminus, the 78-residue chain is Beta-defensin 29 (78 aa).

The signal sequence occupies residues 1 to 23; it reads MPVTKSYFMTVVVVLILVDETTG. 3 disulfides stabilise this stretch: Cys40/Cys67, Cys47/Cys61, and Cys51/Cys68.

This sequence belongs to the beta-defensin family. As to expression, highly expressed in the cauda epididymis.

The protein localises to the secreted. In terms of biological role, has antibacterial activity. The chain is Beta-defensin 29 (Defb29) from Mus musculus (Mouse).